The following is a 431-amino-acid chain: MKLTVVTFALLAFISFNTFAKQVRLDNVAVIVDQGVVLESQIEELVNTVKRNALTNNQTLPSDRVLRTQAIERLIVDSLQNQMAERMGIQISDPQLDQTIDNIAREDGTTVEDLRKNLASEGVSFEVYREQVRKELVTGEVRRANVRRRIYITPQEISNLVTLIDEQGGQQAEYHLGHILIGFPPEPTDEDVSKAKDTAEKVLELLNNGSEFAKIATASSSGSKALEGGDLGWMNINSMPTLFAEAVQGTSKDDLIGPIRSGAGFHVLKIIDFRGIEKVEVAELKSRHILIKPSVILSDEKAEKMLTEFRKELLAGEADFAELAKEHSADPGSALRGGDLGWADPNVYVPAFRDTLQSLEVGEISQPVRSTHGWHLMQLMDKRVQDATEKRKEDKAYQLLFQRKFAEETEAWLKEMRDSAYVELLDEKDNS.

The signal sequence occupies residues 1–20; it reads MKLTVVTFALLAFISFNTFA. 2 PpiC domains span residues 171–272 and 281–381; these read QAEY…KIID and VAEL…QLMD.

The protein localises to the periplasm. It catalyses the reaction [protein]-peptidylproline (omega=180) = [protein]-peptidylproline (omega=0). Functionally, chaperone involved in the correct folding and assembly of outer membrane proteins. Recognizes specific patterns of aromatic residues and the orientation of their side chains, which are found more frequently in integral outer membrane proteins. May act in both early periplasmic and late outer membrane-associated steps of protein maturation. This Pseudoalteromonas atlantica (strain T6c / ATCC BAA-1087) protein is Chaperone SurA.